A 285-amino-acid chain; its full sequence is Bifunctional protein FolD 2 (285 aa).

Residues 164–166 (GRS), Ser-189, and Val-230 contribute to the NADP(+) site.

This sequence belongs to the tetrahydrofolate dehydrogenase/cyclohydrolase family. As to quaternary structure, homodimer.

It catalyses the reaction (6R)-5,10-methylene-5,6,7,8-tetrahydrofolate + NADP(+) = (6R)-5,10-methenyltetrahydrofolate + NADPH. The enzyme catalyses (6R)-5,10-methenyltetrahydrofolate + H2O = (6R)-10-formyltetrahydrofolate + H(+). It participates in one-carbon metabolism; tetrahydrofolate interconversion. Functionally, catalyzes the oxidation of 5,10-methylenetetrahydrofolate to 5,10-methenyltetrahydrofolate and then the hydrolysis of 5,10-methenyltetrahydrofolate to 10-formyltetrahydrofolate. The sequence is that of Bifunctional protein FolD 2 from Geobacter metallireducens (strain ATCC 53774 / DSM 7210 / GS-15).